Reading from the N-terminus, the 237-residue chain is Ribonuclease PH (237 aa).

Phosphate-binding positions include Arg-86 and 124–126 (GTR).

Belongs to the RNase PH family. As to quaternary structure, homohexameric ring arranged as a trimer of dimers.

It carries out the reaction tRNA(n+1) + phosphate = tRNA(n) + a ribonucleoside 5'-diphosphate. Its function is as follows. Phosphorolytic 3'-5' exoribonuclease that plays an important role in tRNA 3'-end maturation. Removes nucleotide residues following the 3'-CCA terminus of tRNAs; can also add nucleotides to the ends of RNA molecules by using nucleoside diphosphates as substrates, but this may not be physiologically important. Probably plays a role in initiation of 16S rRNA degradation (leading to ribosome degradation) during starvation. This Shewanella sediminis (strain HAW-EB3) protein is Ribonuclease PH.